The primary structure comprises 456 residues: Bifunctional protein GlmU (456 aa).

Residues 1-229 are pyrophosphorylase; it reads MLNNAMSVVI…LSEVEGVNNR (229 aa). UDP-N-acetyl-alpha-D-glucosamine is bound by residues 11 to 14, lysine 25, glutamine 76, 81 to 82, 103 to 105, glycine 140, glutamate 154, asparagine 169, and asparagine 227; these read LAAG, GT, and YGD. Aspartate 105 lines the Mg(2+) pocket. Asparagine 227 serves as a coordination point for Mg(2+). The segment at 230 to 250 is linker; sequence LQLSRLERVYQSEQAEKLLLA. Residues 251-456 form an N-acetyltransferase region; the sequence is GVMLRDPARF…EGWRRPVKKK (206 aa). The UDP-N-acetyl-alpha-D-glucosamine site is built by arginine 333 and lysine 351. Histidine 363 serves as the catalytic Proton acceptor. UDP-N-acetyl-alpha-D-glucosamine-binding residues include tyrosine 366 and asparagine 377. Acetyl-CoA-binding positions include alanine 380, 386-387, serine 405, alanine 423, and arginine 440; that span reads NY.

The protein in the N-terminal section; belongs to the N-acetylglucosamine-1-phosphate uridyltransferase family. This sequence in the C-terminal section; belongs to the transferase hexapeptide repeat family. Homotrimer. Mg(2+) serves as cofactor.

It is found in the cytoplasm. The enzyme catalyses alpha-D-glucosamine 1-phosphate + acetyl-CoA = N-acetyl-alpha-D-glucosamine 1-phosphate + CoA + H(+). It carries out the reaction N-acetyl-alpha-D-glucosamine 1-phosphate + UTP + H(+) = UDP-N-acetyl-alpha-D-glucosamine + diphosphate. It functions in the pathway nucleotide-sugar biosynthesis; UDP-N-acetyl-alpha-D-glucosamine biosynthesis; N-acetyl-alpha-D-glucosamine 1-phosphate from alpha-D-glucosamine 6-phosphate (route II): step 2/2. It participates in nucleotide-sugar biosynthesis; UDP-N-acetyl-alpha-D-glucosamine biosynthesis; UDP-N-acetyl-alpha-D-glucosamine from N-acetyl-alpha-D-glucosamine 1-phosphate: step 1/1. Its pathway is bacterial outer membrane biogenesis; LPS lipid A biosynthesis. In terms of biological role, catalyzes the last two sequential reactions in the de novo biosynthetic pathway for UDP-N-acetylglucosamine (UDP-GlcNAc). The C-terminal domain catalyzes the transfer of acetyl group from acetyl coenzyme A to glucosamine-1-phosphate (GlcN-1-P) to produce N-acetylglucosamine-1-phosphate (GlcNAc-1-P), which is converted into UDP-GlcNAc by the transfer of uridine 5-monophosphate (from uridine 5-triphosphate), a reaction catalyzed by the N-terminal domain. The protein is Bifunctional protein GlmU of Shigella sonnei (strain Ss046).